The chain runs to 92 residues: C-C motif chemokine 4 (92 aa).

An N-terminal signal peptide occupies residues 1–23 (MKLGVTVLSVALLVAALCPPALS). 2 disulfides stabilise this stretch: C34/C58 and C35/C74.

The protein belongs to the intercrine beta (chemokine CC) family. In terms of assembly, homodimer.

The protein localises to the secreted. In terms of biological role, monokine with inflammatory and chemokinetic properties. This Oryctolagus cuniculus (Rabbit) protein is C-C motif chemokine 4 (CCL4).